The sequence spans 198 residues: Peptidyl-tRNA hydrolase (198 aa).

TRNA is bound at residue Y15. Catalysis depends on H20, which acts as the Proton acceptor. TRNA is bound by residues F66, N68, and N114.

The protein belongs to the PTH family. Monomer.

It localises to the cytoplasm. It catalyses the reaction an N-acyl-L-alpha-aminoacyl-tRNA + H2O = an N-acyl-L-amino acid + a tRNA + H(+). In terms of biological role, hydrolyzes ribosome-free peptidyl-tRNAs (with 1 or more amino acids incorporated), which drop off the ribosome during protein synthesis, or as a result of ribosome stalling. Its function is as follows. Catalyzes the release of premature peptidyl moieties from peptidyl-tRNA molecules trapped in stalled 50S ribosomal subunits, and thus maintains levels of free tRNAs and 50S ribosomes. This is Peptidyl-tRNA hydrolase from Cupriavidus taiwanensis (strain DSM 17343 / BCRC 17206 / CCUG 44338 / CIP 107171 / LMG 19424 / R1) (Ralstonia taiwanensis (strain LMG 19424)).